The following is a 473-amino-acid chain: Ribulose bisphosphate carboxylase large chain (473 aa).

2 residues coordinate substrate: asparagine 116 and threonine 166. The active-site Proton acceptor is the lysine 168. Residue lysine 170 coordinates substrate. Mg(2+) contacts are provided by lysine 194, aspartate 196, and glutamate 197. Residue lysine 194 is modified to N6-carboxylysine. The active-site Proton acceptor is histidine 287. 3 residues coordinate substrate: arginine 288, histidine 320, and serine 372.

It belongs to the RuBisCO large chain family. Type I subfamily. In terms of assembly, heterohexadecamer of 8 large chains and 8 small chains. Mg(2+) is required as a cofactor.

It carries out the reaction 2 (2R)-3-phosphoglycerate + 2 H(+) = D-ribulose 1,5-bisphosphate + CO2 + H2O. It catalyses the reaction D-ribulose 1,5-bisphosphate + O2 = 2-phosphoglycolate + (2R)-3-phosphoglycerate + 2 H(+). RuBisCO catalyzes two reactions: the carboxylation of D-ribulose 1,5-bisphosphate, the primary event in carbon dioxide fixation, as well as the oxidative fragmentation of the pentose substrate. Both reactions occur simultaneously and in competition at the same active site. The chain is Ribulose bisphosphate carboxylase large chain from Thiomonas intermedia (strain K12) (Thiobacillus intermedius).